We begin with the raw amino-acid sequence, 356 residues long: UDP-N-acetylglucosamine--N-acetylmuramyl-(pentapeptide) pyrophosphoryl-undecaprenol N-acetylglucosamine transferase (356 aa).

UDP-N-acetyl-alpha-D-glucosamine is bound by residues Ser-198 and Gln-289.

It belongs to the glycosyltransferase 28 family. MurG subfamily.

The protein localises to the cell membrane. It catalyses the reaction Mur2Ac(oyl-L-Ala-gamma-D-Glu-L-Lys-D-Ala-D-Ala)-di-trans,octa-cis-undecaprenyl diphosphate + UDP-N-acetyl-alpha-D-glucosamine = beta-D-GlcNAc-(1-&gt;4)-Mur2Ac(oyl-L-Ala-gamma-D-Glu-L-Lys-D-Ala-D-Ala)-di-trans,octa-cis-undecaprenyl diphosphate + UDP + H(+). It participates in cell wall biogenesis; peptidoglycan biosynthesis. In terms of biological role, cell wall formation. Catalyzes the transfer of a GlcNAc subunit on undecaprenyl-pyrophosphoryl-MurNAc-pentapeptide (lipid intermediate I) to form undecaprenyl-pyrophosphoryl-MurNAc-(pentapeptide)GlcNAc (lipid intermediate II). In Streptococcus thermophilus (strain CNRZ 1066), this protein is UDP-N-acetylglucosamine--N-acetylmuramyl-(pentapeptide) pyrophosphoryl-undecaprenol N-acetylglucosamine transferase.